Consider the following 686-residue polypeptide: AsmA family protein YhjG (686 aa).

Residues 1-6 are Cytoplasmic-facing; it reads MSKAGK. A helical transmembrane segment spans residues 7 to 27; the sequence is ITAAISGAFLLLIVVAIILIA. Residues 28–686 lie on the Periplasmic side of the membrane; it reads TFDWNRLKPT…CRTILSQMKK (659 aa). Residues 372–396 form a disordered region; it reads VDSGKGAEKSKRSEQKKGEKSVQPA. The segment covering 376–391 has biased composition (basic and acidic residues); sequence KGAEKSKRSEQKKGEK.

Belongs to the AsmA family.

It localises to the cell inner membrane. This chain is AsmA family protein YhjG (yhjG), found in Escherichia coli (strain K12).